A 199-amino-acid chain; its full sequence is Protein-methionine-sulfoxide reductase heme-binding subunit MsrQ (199 aa).

A run of 5 helical transmembrane segments spans residues 13–33 (VLLH…VDQG), 79–99 (LLGL…ALLE), 120–140 (LGVI…QIMM), 147–167 (WQKL…HYLW), and 169–189 (VKTL…LLLF).

Belongs to the MsrQ family. Heterodimer of a catalytic subunit (MsrP) and a heme-binding subunit (MsrQ). Requires FMN as cofactor. It depends on heme b as a cofactor.

The protein resides in the cell inner membrane. In terms of biological role, part of the MsrPQ system that repairs oxidized periplasmic proteins containing methionine sulfoxide residues (Met-O), using respiratory chain electrons. Thus protects these proteins from oxidative-stress damage caused by reactive species of oxygen and chlorine generated by the host defense mechanisms. MsrPQ is essential for the maintenance of envelope integrity under bleach stress, rescuing a wide series of structurally unrelated periplasmic proteins from methionine oxidation. MsrQ provides electrons for reduction to the reductase catalytic subunit MsrP, using the quinone pool of the respiratory chain. This Pectobacterium carotovorum subsp. carotovorum (strain PC1) protein is Protein-methionine-sulfoxide reductase heme-binding subunit MsrQ.